Consider the following 198-residue polypeptide: Nucleoid occlusion factor SlmA (198 aa).

The 62-residue stretch at 9 to 70 (RNRREEILQA…SLIEFIEDSL (62 aa)) folds into the HTH tetR-type domain. The segment at residues 33–52 (TTAKLAANVGVSEAALYRHF) is a DNA-binding region (H-T-H motif). Residues 119-144 (DRLQGRINQLFERIEMQLRQVLREKK) adopt a coiled-coil conformation.

It belongs to the nucleoid occlusion factor SlmA family. Homodimer. Interacts with FtsZ.

It localises to the cytoplasm. The protein resides in the nucleoid. In terms of biological role, required for nucleoid occlusion (NO) phenomenon, which prevents Z-ring formation and cell division over the nucleoid. Acts as a DNA-associated cell division inhibitor that binds simultaneously chromosomal DNA and FtsZ, and disrupts the assembly of FtsZ polymers. SlmA-DNA-binding sequences (SBS) are dispersed on non-Ter regions of the chromosome, preventing FtsZ polymerization at these regions. The protein is Nucleoid occlusion factor SlmA of Yersinia pseudotuberculosis serotype I (strain IP32953).